Reading from the N-terminus, the 1070-residue chain is Duffy receptor (1070 aa).

The signal sequence occupies residues 1-20 (MKGKNRSLFVLLVLLLLHKV). Residues 21 to 1007 (NNVLLERTIE…CFTKGGFKDK (987 aa)) are Extracellular-facing. A disordered region spans residues 116–146 (YMEGKDGGDKTGEEKDGEHKTDSKTDNGKGA). Over residues 118-142 (EGKDGGDKTGEEKDGEHKTDSKTDN) the composition is skewed to basic and acidic residues. Asn183 carries N-linked (GlcNAc...) asparagine glycosylation. A pvRII region; mediates ACKR1 binding region spans residues 211–521 (NTVMKNCNYK…AKKNTQEVVT (311 aa)). Intrachain disulfides connect Cys217/Cys246 and Cys230/Cys237. N-linked (GlcNAc...) asparagine glycosylation is found at Asn255, Asn351, and Asn420. Intrachain disulfides connect Cys300–Cys377, Cys415–Cys432, Cys427–Cys507, and Cys436–Cys505. 3 stretches are compositionally biased toward polar residues: residues 525-542 (NAAK…QPVD), 554-569 (THGN…TTGK), and 629-642 (GASN…TVEA). Residues 525-906 (NAAKSQATNS…HLNSNNNLSN (382 aa)) form a disordered region. The segment covering 697–711 (ETGKGQDNDMAKATK) has biased composition (basic and acidic residues). A compositionally biased stretch (low complexity) spans 712 to 728 (DSSNSSDGTSSATGDTT). Residue Asn715 is glycosylated (N-linked (GlcNAc...) asparagine). The segment covering 730-748 (AVDREINKGVPEDRDKTVG) has biased composition (basic and acidic residues). Residue Asn787 is glycosylated (N-linked (GlcNAc...) asparagine). Over residues 808–817 (LSKTESLEST) the composition is skewed to low complexity. N-linked (GlcNAc...) asparagine glycosylation is present at Asn825. Composition is skewed to basic and acidic residues over residues 835–849 (NGGK…DFKS) and 865–889 (AEGH…KDTF). Positions 895-906 (SHHLNSNNNLSN) are enriched in low complexity. N-linked (GlcNAc...) asparagine glycans are attached at residues Asn903 and Asn938. A helical membrane pass occupies residues 1008 to 1025 (TYFAAAGALLILLLLIAS). Over 1026-1070 (RKMIKNDSEEATFNEFEEYCDNIHRIPLMPNNIEHMQPSTPLDYS) the chain is Cytoplasmic.

Homodimer; dimerization (via PvRII region) is promoted by the interaction with human ACKR1. Interacts (via PvRII region) with human ACKR1 (via N-terminal extracellular domain).

It localises to the membrane. In terms of biological role, binds to the human erythrocyte Duffy blood group determinant (ACKR1). The sequence is that of Duffy receptor (PVDR) from Plasmodium vivax (strain Salvador I).